The primary structure comprises 133 residues: Holo-[acyl-carrier-protein] synthase (133 aa).

The Mg(2+) site is built by Asp-8 and Glu-57.

It belongs to the P-Pant transferase superfamily. AcpS family. Mg(2+) serves as cofactor.

The protein localises to the cytoplasm. The catalysed reaction is apo-[ACP] + CoA = holo-[ACP] + adenosine 3',5'-bisphosphate + H(+). Functionally, transfers the 4'-phosphopantetheine moiety from coenzyme A to a Ser of acyl-carrier-protein. The sequence is that of Holo-[acyl-carrier-protein] synthase from Chelativorans sp. (strain BNC1).